The following is a 202-amino-acid chain: MGANSSSPAGLTPSSLPDDAIEVGRILDAWGVKGWVKILPHSTDPEALFSAKSWFLQAPEAKFRPGFNAFSGTVLLSVDEAKTHSDTVVAKFSGQDDRNAAEALRGARIFLPRSSFPVASKDEYYWVDLIGLNVVNREGVPLGQVRDLMTTGPHSVLCVEYTAQQEDGTAVTAERMIPFVSAYIDTVDIAGKCITVDWQPDY.

Residues 121–202 (KDEYYWVDLI…CITVDWQPDY (82 aa)) enclose the PRC barrel domain.

This sequence belongs to the RimM family. As to quaternary structure, binds ribosomal protein uS19.

It localises to the cytoplasm. In terms of biological role, an accessory protein needed during the final step in the assembly of 30S ribosomal subunit, possibly for assembly of the head region. Essential for efficient processing of 16S rRNA. May be needed both before and after RbfA during the maturation of 16S rRNA. It has affinity for free ribosomal 30S subunits but not for 70S ribosomes. In Polaromonas sp. (strain JS666 / ATCC BAA-500), this protein is Ribosome maturation factor RimM.